Here is a 319-residue protein sequence, read N- to C-terminus: Serine/threonine-protein phosphatase PP1 isozyme 2 (319 aa).

Mn(2+) is bound by residues D61, H63, D89, and N121. Catalysis depends on H122, which acts as the Proton donor. Residues H170 and H245 each contribute to the Mn(2+) site.

This sequence belongs to the PPP phosphatase family. PP-1 subfamily. It depends on Mn(2+) as a cofactor.

It catalyses the reaction O-phospho-L-seryl-[protein] + H2O = L-seryl-[protein] + phosphate. It carries out the reaction O-phospho-L-threonyl-[protein] + H2O = L-threonyl-[protein] + phosphate. This chain is Serine/threonine-protein phosphatase PP1 isozyme 2, found in Acetabularia peniculus (Green alga).